The following is a 509-amino-acid chain: MFS transporter fsdG (509 aa).

2 N-linked (GlcNAc...) asparagine glycosylation sites follow: asparagine 8 and asparagine 26. 4 helical membrane passes run 63–83 (FLIHTILVSMLCLAGNLATTM), 103–123 (IALTVSIYLLGFALAPMVTSP), 139–159 (IFFLGFNLACAFSSNIGMFIA), and 162–182 (FLAGCAGSAPMTVGGGTIADF). Residue asparagine 189 is glycosylated (N-linked (GlcNAc...) asparagine). Transmembrane regions (helical) follow at residues 195–215 (LFALGPLLGPVIGPIVGGFVA), 222–242 (WTFRIMSIVIAVLSILSCIFL), 298–318 (LIFLPQVLILSFYTAFVFGLI), and 341–361 (GLSYIGIGFGMVGALFLFNFI). The N-linked (GlcNAc...) asparagine glycan is linked to asparagine 367. A run of 4 helical transmembrane segments spans residues 380-400 (YLPLMTWFSPLLPIGFFWYGW), 408-428 (WVVPILGTFFVGFGSFAIIMP), 442-462 (AASVLAASNMMRYVFAAFLPL), and 474-494 (GWGNSLLGFLCVVLAPVPAIF).

The protein belongs to the major facilitator superfamily.

The protein resides in the cell membrane. Functionally, efflux pump that might be required for efficient secretion of fusaridione A or other secondary metabolies produced by the fusaridione A gene cluster. The sequence is that of MFS transporter fsdG from Fusarium heterosporum.